The chain runs to 423 residues: Enolase (423 aa).

Q163 provides a ligand contact to (2R)-2-phosphoglycerate. The Proton donor role is filled by E205. Positions 242, 285, and 312 each coordinate Mg(2+). (2R)-2-phosphoglycerate-binding residues include K337, R366, S367, and K388. K337 serves as the catalytic Proton acceptor.

This sequence belongs to the enolase family. Mg(2+) serves as cofactor.

The protein resides in the cytoplasm. The protein localises to the secreted. It localises to the cell surface. The catalysed reaction is (2R)-2-phosphoglycerate = phosphoenolpyruvate + H2O. It participates in carbohydrate degradation; glycolysis; pyruvate from D-glyceraldehyde 3-phosphate: step 4/5. In terms of biological role, catalyzes the reversible conversion of 2-phosphoglycerate (2-PG) into phosphoenolpyruvate (PEP). It is essential for the degradation of carbohydrates via glycolysis. The polypeptide is Enolase (Desulforapulum autotrophicum (strain ATCC 43914 / DSM 3382 / VKM B-1955 / HRM2) (Desulfobacterium autotrophicum)).